We begin with the raw amino-acid sequence, 358 residues long: Dual-specificity RNA methyltransferase RlmN (358 aa).

E91 (proton acceptor) is an active-site residue. The Radical SAM core domain maps to 102–337 (GNIRITQCLS…TILRKSKGQD (236 aa)). An intrachain disulfide couples C109 to C342. Residues C116, C120, and C123 each coordinate [4Fe-4S] cluster. Residues 169–170 (GE), S201, 223–225 (SLH), and N299 each bind S-adenosyl-L-methionine. The active-site S-methylcysteine intermediate is the C342.

This sequence belongs to the radical SAM superfamily. RlmN family. The cofactor is [4Fe-4S] cluster.

The protein localises to the cytoplasm. The enzyme catalyses adenosine(2503) in 23S rRNA + 2 reduced [2Fe-2S]-[ferredoxin] + 2 S-adenosyl-L-methionine = 2-methyladenosine(2503) in 23S rRNA + 5'-deoxyadenosine + L-methionine + 2 oxidized [2Fe-2S]-[ferredoxin] + S-adenosyl-L-homocysteine. The catalysed reaction is adenosine(37) in tRNA + 2 reduced [2Fe-2S]-[ferredoxin] + 2 S-adenosyl-L-methionine = 2-methyladenosine(37) in tRNA + 5'-deoxyadenosine + L-methionine + 2 oxidized [2Fe-2S]-[ferredoxin] + S-adenosyl-L-homocysteine. Specifically methylates position 2 of adenine 2503 in 23S rRNA and position 2 of adenine 37 in tRNAs. m2A2503 modification seems to play a crucial role in the proofreading step occurring at the peptidyl transferase center and thus would serve to optimize ribosomal fidelity. The protein is Dual-specificity RNA methyltransferase RlmN of Lawsonia intracellularis (strain PHE/MN1-00).